Consider the following 147-residue polypeptide: Large ribosomal subunit protein uL13 (147 aa).

The protein belongs to the universal ribosomal protein uL13 family. As to quaternary structure, part of the 50S ribosomal subunit.

In terms of biological role, this protein is one of the early assembly proteins of the 50S ribosomal subunit, although it is not seen to bind rRNA by itself. It is important during the early stages of 50S assembly. This chain is Large ribosomal subunit protein uL13, found in Latilactobacillus sakei subsp. sakei (strain 23K) (Lactobacillus sakei subsp. sakei).